The primary structure comprises 214 residues: Somatotropin-A (214 aa).

Positions 1 to 25 (MATGFCSSFGLLVVLLLKNVADVGA) are cleaved as a signal peptide. Disulfide bonds link C77-C187 and C204-C212.

The protein belongs to the somatotropin/prolactin family.

The protein resides in the secreted. Functionally, growth hormone plays an important role in growth control. In Xenopus laevis (African clawed frog), this protein is Somatotropin-A (gh-a).